The sequence spans 208 residues: Harpin secretion protein HrpW (208 aa).

A run of 4 helical transmembrane segments spans residues 2-22, 46-66, 149-169, and 176-196; these read LALF…CTAF, ALYG…AHDI, IGFL…NLLL, and VSPM…VSGW.

The protein belongs to the FliP/MopC/SpaP family.

The protein localises to the cell membrane. In terms of biological role, required for the secretion of harpin. This chain is Harpin secretion protein HrpW (hrpW), found in Pseudomonas syringae pv. syringae.